We begin with the raw amino-acid sequence, 175 residues long: tRNA-acetylating toxin 3 (175 aa).

Residues leucine 95, valine 97, glycine 103, glycine 105, glycine 107, alanine 108, aspartate 133, glutamine 138, aspartate 141, and tryptophan 142 each contribute to the acetyl-CoA site. Tyrosine 143 is an active-site residue. The acetyl-CoA site is built by glycine 145 and phenylalanine 146.

Belongs to the acetyltransferase family. GNAT subfamily. As to quaternary structure, homodimer (in absence of antitoxin); has a condensed and elongated form. Forms a complex with cognate antitoxin TacA3. Forms a 4:2 antitoxin:toxin complex with cognate antitoxin TacA3. Forms a 4:4 antitoxin:toxin complex with promoter DNA, where 2 TacT3 dimers bridge 2 TacA3 dimers. Only TacA3 contacts promoter DNA in the octomeric form. TacT3 may contact DNA in the hexameric form.

The catalysed reaction is glycyl-tRNA(Gly) + acetyl-CoA = N-acetylglycyl-tRNA(Gly) + CoA + H(+). Functionally, toxic component of a type II toxin-antitoxin (TA) system. Acetylates tRNA and inhibits translation. Acetylates only Gly-tRNA on all 3 Gly-tRNA(Gly) isoacceptors in situ. In vitro acetylates mainly Ile/Leu and Gly. Overexpression during the lag phase of a tacA3-tacT3 deletion strain leads to a 150-fold increase in persister cells in the presence of cefotaxime and a non-growth state in the absence of antibiotic. Persister cell formation and the growth defect are neutralized by cognate antitoxin TacA3, but not by TacA1 or TacA2. Plays a role in persister cell formation. Its function is as follows. The TacA3-TacT3 complex both represses and derepresses expression of its own operon. The hexameric 4:2 TacA3-TacT3 complex binds promoter DNA and represses its transcription; both subunits are required. The octomeric 4:4 TacA3-TacT3 complex derepresses the operon. The shift from hexameric to octomeric complex probably alters DNA-binding, leading to dissociation from the operator DNA and derepression. The chain is tRNA-acetylating toxin 3 from Salmonella typhimurium (strain 14028s / SGSC 2262).